A 668-amino-acid chain; its full sequence is CLK4-associating serine/arginine rich protein (668 aa).

The residue at position 101 (Ser101) is a Phosphoserine. Disordered stretches follow at residues 173–232 (AEVE…GMAD) and 252–668 (AKAL…HYRH). Acidic residues predominate over residues 182-214 (PEEEESPAEEESNSDEDEVIPDIDVEVDVDELN). Residues 265-283 (RRSRRQRREFREKRLRGRK) are compositionally biased toward basic residues. Phosphoserine occurs at positions 285 and 294. The span at 290–313 (ARRDSPTYDPYKRSPSESSSESRS) shows a compositional bias: basic and acidic residues. Thr327 is subject to Phosphothreonine. Phosphoserine is present on residues Ser331 and Ser335. Over residues 340 to 353 (AAAAAAAAASGAAP) the composition is skewed to low complexity. Residues 354–365 (GKPPAPPQPGGP) show a composition bias toward pro residues. A compositionally biased stretch (low complexity) spans 378–395 (SSSSASRTSSSRSSSRSS). Basic residues predominate over residues 396-435 (SRSRRGYYRSGRHARSRSRSWSRSRSRSRRYSRSRSRGRR). The span at 436–446 (HSDGGSRDGHR) shows a compositional bias: basic and acidic residues. Basic residues predominate over residues 475 to 486 (RGARGPRHHSSS). Composition is skewed to low complexity over residues 487–510 (HSRS…SRSQ) and 518–527 (QSHSQSQSHS). A Phosphoserine modification is found at Ser541. A Phosphothreonine modification is found at Thr567. A coiled-coil region spans residues 579–641 (ALNRQFKADK…ERQYSRQSRS (63 aa)). Basic and acidic residues-rich tracts occupy residues 584-611 (FKAD…ELRA) and 619-635 (KERE…ERQY). The segment covering 636-645 (SRQSRSPSPR) has biased composition (low complexity). Basic residues predominate over residues 653-668 (SRRRSRSRSRSPHYRH).

It belongs to the splicing factor SR family. As to quaternary structure, probably interacts with CLK4. In terms of processing, phosphorylated in vitro by CLK4.

The protein localises to the nucleus. In terms of biological role, probably functions as an alternative splicing regulator. May regulate the mRNA splicing of genes such as CLK1. May act by regulating members of the CLK kinase family. In Rattus norvegicus (Rat), this protein is CLK4-associating serine/arginine rich protein (Clasrp).